The sequence spans 341 residues: uncharacterized protein (341 aa).

Active-site residues include Ser-111, Asp-247, and His-275.

The protein belongs to the DmpD/TodF/XylF esterase family.

This is an uncharacterized protein from Mycobacterium bovis (strain ATCC BAA-935 / AF2122/97).